The sequence spans 155 residues: Sweet protein mabinlin-2 (155 aa).

A signal peptide spans 1–20; it reads MAKLIFLFATLALFVLLANA. Residues 21 to 35 constitute a propeptide that is removed on maturation; sequence SIQTTVIEVDEEEDN. The residue at position 36 (Gln36) is a Pyrrolidone carboxylic acid. Cystine bridges form between Cys40–Cys103, Cys53–Cys92, Cys93–Cys141, and Cys105–Cys149. Residues 64–86 form a disordered region; that stretch reads GGQPDELEDEVEDDNDDENQPRR. The segment covering 68 to 81 has biased composition (acidic residues); that stretch reads DELEDEVEDDNDDE. Positions 69–82 are excised as a propeptide; sequence ELEDEVEDDNDDEN. Residue Gln83 is modified to Pyrrolidone carboxylic acid. Residue Pro155 is a propeptide.

The protein belongs to the 2S seed storage albumins family. As to quaternary structure, heterodimer of a small A and a large B chain linked by disulfide bonds.

Its function is as follows. Heat stable 2S seed storage protein having sweetness-inducing activity. In Capparis masaikai (Mabinlang), this protein is Sweet protein mabinlin-2.